The following is a 605-amino-acid chain: uncharacterized protein (605 aa).

A helical transmembrane segment spans residues 56 to 78; it reads ILWSSIAAACVILFAAYKTGAYF.

The protein localises to the cell membrane. This is an uncharacterized protein from Bacillus subtilis (strain 168).